The chain runs to 813 residues: Leucine--tRNA ligase (813 aa).

Residues Pro42–His52 carry the 'HIGH' region motif. Residues Lys580–Ser584 carry the 'KMSKS' region motif. ATP is bound at residue Lys583.

It belongs to the class-I aminoacyl-tRNA synthetase family.

The protein resides in the cytoplasm. It catalyses the reaction tRNA(Leu) + L-leucine + ATP = L-leucyl-tRNA(Leu) + AMP + diphosphate. This Dehalococcoides mccartyi (strain ATCC BAA-2100 / JCM 16839 / KCTC 5957 / BAV1) protein is Leucine--tRNA ligase.